The following is a 501-amino-acid chain: Beta-secretase 1 (501 aa).

An N-terminal signal peptide occupies residues 1 to 21 (MAPALHWLLLWVGSGMLPAQG). Positions 22–45 (THLGIRLPLRSGLAGPPLGLRLPR) are excised as a propeptide. The Extracellular portion of the chain corresponds to 22-457 (THLGIRLPLR…PQTDESTLMT (436 aa)). The disordered stretch occupies residues 39-58 (LGLRLPRETDEESEEPGRRG). The region spanning 75-416 (YYVEMTVGSP…DRARKRIGFA (342 aa)) is the Peptidase A1 domain. The active site involves D93. K126 carries the N6-acetyllysine modification. 3 N-linked (GlcNAc...) asparagine glycosylation sites follow: N153, N172, and N223. Disulfide bonds link C216–C420, C278–C443, and C330–C380. N6-acetyllysine is present on residues K275, K279, and K285. Residue D289 is part of the active site. 3 positions are modified to N6-acetyllysine: K299, K300, and K307. N354 carries an N-linked (GlcNAc...) asparagine glycan. The chain crosses the membrane as a helical span at residues 458-478 (IAYVMAAICALFMLPLCLMVC). Residues C474, C478, C482, and C485 are each lipidated (S-palmitoyl cysteine). Residues 479 to 501 (QWRCLRCLRHQHDDFADDISLLK) are Cytoplasmic-facing. The interval 479 to 501 (QWRCLRCLRHQHDDFADDISLLK) is interaction with RTN3. Positions 496–500 (DISLL) match the DXXLL motif. The residue at position 498 (S498) is a Phosphoserine. Residue K501 forms a Glycyl lysine isopeptide (Lys-Gly) (interchain with G-Cter in ubiquitin) linkage.

This sequence belongs to the peptidase A1 family. Monomer. Interacts (via DXXLL motif) with GGA1, GGA2 and GGA3 (via their VHS domain); the interaction highly increases when BACE1 is phosphorylated at Ser-498. Interacts with RTN1; RTN2; RTN3 and RTN4; the interaction leads to inhibition of amyloid precursor protein processing. Interacts with SNX6. Interacts with PCSK9. Interacts with NAT8 and NAT8B. Interacts with BIN1. Interacts (via extracellular domain) with ADAM10 (via extracellular domain). Interacts with SORL1; this interaction may affect binding with APP and hence reduce APP cleavage. Interacts with NRDC AND NRG1. In terms of processing, N-Glycosylated. Addition of a bisecting N-acetylglucosamine by MGAT3 blocks lysosomal targeting, further degradation and is required for maintaining stability under stress conditions. Post-translationally, palmitoylation mediates lipid raft localization. Acetylated in the endoplasmic reticulum at Lys-126, Lys-275, Lys-279, Lys-285, Lys-299, Lys-300 and Lys-307. Acetylation by NAT8 and NAT8B is transient and deacetylation probably occurs in the Golgi. Acetylation regulates the maturation, the transport to the plasma membrane, the stability and the expression of the protein. In terms of processing, ubiquitinated at Lys-501, ubiquitination leads to lysosomal degradation. Monoubiquitinated and 'Lys-63'-linked polyubitinated. Deubiquitnated by USP8; inhibits lysosomal degradation. Post-translationally, phosphorylation at Ser-498 is required for interaction with GGA1 and retrograded transport from endosomal compartments to the trans-Golgi network. Non-phosphorylated BACE1 enters a direct recycling route to the cell surface. In terms of tissue distribution, expressed in the brain, specifically in neurons and astrocytes (at protein level).

It is found in the cell membrane. Its subcellular location is the golgi apparatus. The protein resides in the trans-Golgi network. It localises to the endoplasmic reticulum. The protein localises to the endosome. It is found in the late endosome. Its subcellular location is the early endosome. The protein resides in the cell surface. It localises to the cytoplasmic vesicle membrane. The protein localises to the membrane raft. It is found in the lysosome. Its subcellular location is the recycling endosome. The protein resides in the cell projection. It localises to the axon. The protein localises to the dendrite. The enzyme catalyses Broad endopeptidase specificity. Cleaves Glu-Val-Asn-Leu-|-Asp-Ala-Glu-Phe in the Swedish variant of Alzheimer's amyloid precursor protein.. Inhibited by RTN3 and RTN4. In terms of biological role, responsible for the proteolytic processing of the amyloid precursor protein (APP). Cleaves at the N-terminus of the A-beta peptide sequence, between residues 671 and 672 of APP, leads to the generation and extracellular release of beta-cleaved soluble APP, and a corresponding cell-associated C-terminal fragment which is later released by gamma-secretase. Cleaves CHL1. This chain is Beta-secretase 1, found in Mus musculus (Mouse).